Consider the following 125-residue polypeptide: Glutaredoxin-C1 (125 aa).

One can recognise a Glutaredoxin domain in the interval 19–119; that stretch reads VNKAKEIVSA…PLLTEAGAIA (101 aa). Cys39 and Cys42 form a disulfide bridge.

It belongs to the glutaredoxin family. CPYC subfamily.

The protein resides in the cytoplasm. Its function is as follows. Has a glutathione-disulfide oxidoreductase activity in the presence of NADPH and glutathione reductase. Reduces low molecular weight disulfides and proteins. The chain is Glutaredoxin-C1 (GRXC1) from Arabidopsis thaliana (Mouse-ear cress).